Consider the following 674-residue polypeptide: Probable copper-transporting P-type ATPase B (674 aa).

The tract at residues 1-22 (MNHSNQMHHDNHASHDHHSGHA) is disordered. A compositionally biased stretch (basic and acidic residues) spans 7–19 (MHHDNHASHDHHS). 6 helical membrane-spanning segments follow: residues 32–52 (FFVS…MGVN), 57–77 (FTFP…FFYG), 95–115 (GMMT…LYAF), 127–147 (TMDF…GHWI), 284–304 (GYLF…WMLI), and 315–335 (LVTV…PLVT). D367 acts as the 4-aspartylphosphate intermediate in catalysis. D565 and D569 together coordinate Mg(2+). The next 2 membrane-spanning stretches (helical) occupy residues 623-645 (LWWG…AFIG) and 649-671 (SPAI…AFTL).

The protein belongs to the cation transport ATPase (P-type) (TC 3.A.3) family. Type IB subfamily.

It is found in the cell membrane. The enzyme catalyses Cu(+)(in) + ATP + H2O = Cu(+)(out) + ADP + phosphate + H(+). Functionally, involved in copper transport. This Staphylococcus aureus (strain USA300 / TCH1516) protein is Probable copper-transporting P-type ATPase B (copB).